Reading from the N-terminus, the 409-residue chain is Pleckstrin homology domain-containing family O member 1 (409 aa).

Residues 1–24 (MMKKNNSAKRGPQDGNQQPAPPEK) form a disordered region. Residues 21 to 132 (PPEKVGWVRK…WINALNSAIT (112 aa)) form the PH domain. Residues 133-193 (RAKNRILDEV…MLTLDLIQEE (61 aa)) form an interaction with capping proteins (CPs) region. The interaction with ATM, CKIP, IFP35 and NMI stretch occupies residues 136 to 308 (NRILDEVTVE…LPNPGQLSRI (173 aa)). The segment at 218-267 (LAGSRRRADSDRIQPSADRASSLSRPWEKTDKGATYTPQAPKKLTPTEKG) is disordered. 2 positions are modified to phosphoserine: S227 and S271. The negative regulator of AP-1 activity stretch occupies residues 308-409 (IQDLVARKLE…PHSQYRKSLM (102 aa)). Disordered regions lie at residues 325–350 (EVQG…ESEQ) and 390–409 (TPDS…KSLM). Residues 331–340 (DGKRKAKDPP) are compositionally biased toward basic and acidic residues. At S342 the chain carries Phosphoserine. Positions 390–402 (TPDSHLRQTTPHS) are enriched in polar residues.

In terms of assembly, heterodimer or homodimer. Interacts with CK2 and actin capping subunits (capping protein CP-alpha and CP-beta). CKIP1 and CK2 together inhibit the activity of actin capping protein at the barbed ends of actin filaments. Interacts with ATM, IFP35, JUN, JUND, NMI and PI3K. Interacts with AKT1, AKT2 and AKT3 (each isozyme of PKB), PtdIns(3,5)P2, PtdIns(4,5)P2 and PtdIns(3,4,5)P2. Post-translationally, C-terminal fragments could be released during apoptosis via caspase-3-dependent cleavage. As to expression, abundantly expressed in skeletal muscle and heart, moderately in kidney, liver, brain and placenta and sparingly in the pancreas and lung. Easily detectable in cell lines such as MOLT-4, HEK293 and Jurkat.

Its subcellular location is the cell membrane. It is found in the nucleus. The protein resides in the cytoplasm. Plays a role in the regulation of the actin cytoskeleton through its interactions with actin capping protein (CP). May function to target CK2 to the plasma membrane thereby serving as an adapter to facilitate the phosphorylation of CP by protein kinase 2 (CK2). Appears to target ATM to the plasma membrane. Appears to also inhibit tumor cell growth by inhibiting AKT-mediated cell-survival. Also implicated in PI3K-regulated muscle differentiation, the regulation of AP-1 activity (plasma membrane bound AP-1 regulator that translocates to the nucleus) and the promotion of apoptosis induced by tumor necrosis factor TNF. When bound to PKB, it inhibits it probably by decreasing PKB level of phosphorylation. This chain is Pleckstrin homology domain-containing family O member 1 (PLEKHO1), found in Homo sapiens (Human).